The chain runs to 267 residues: Eukaryotic translation initiation factor 3 subunit J (267 aa).

Disordered regions lie at residues 1-118 (MAPS…DLKH) and 221-241 (MREE…KTKV). Positions 28–46 (DEEEEDVLDSWDAAEDSEV) are enriched in acidic residues. Residues 44 to 99 (SEVEREKAAKAAAAAAKAEAEAAAKKKSKAQRIEERKQERKKLAEANESDEDSEED) are a coiled coil. The segment covering 74–88 (QRIEERKQERKKLAE) has biased composition (basic and acidic residues). Positions 90–100 (NESDEDSEEDE) are enriched in acidic residues. Composition is skewed to basic and acidic residues over residues 108-118 (RRTEKEGDLKH) and 221-231 (MREERAADKGN).

This sequence belongs to the eIF-3 subunit J family. As to quaternary structure, component of the eukaryotic translation initiation factor 3 (eIF-3) complex.

The protein localises to the cytoplasm. Its function is as follows. Component of the eukaryotic translation initiation factor 3 (eIF-3) complex, which is involved in protein synthesis of a specialized repertoire of mRNAs and, together with other initiation factors, stimulates binding of mRNA and methionyl-tRNAi to the 40S ribosome. The eIF-3 complex specifically targets and initiates translation of a subset of mRNAs involved in cell proliferation. The chain is Eukaryotic translation initiation factor 3 subunit J (hcr1) from Aspergillus fumigatus (strain CBS 144.89 / FGSC A1163 / CEA10) (Neosartorya fumigata).